The following is a 124-amino-acid chain: CBS domain-containing protein MJ0729 (124 aa).

2 consecutive CBS domains span residues Met-10 to Leu-67 and Leu-70 to Arg-124.

As to quaternary structure, exhibits a pH-dependent oligomerization state: at pH 7, the dominant species is a dimer, where each monomer is a two-CBS domain protein, and at pH 4.5-4.8, the dominant species is a tetramer, with an oblong shape. At pH 2.5, there is formation of intermolecular hydrogen bonds, suggesting the presence of high-molecular weight species. The physiological dimeric species is thermal and chemically very stable.

The polypeptide is CBS domain-containing protein MJ0729 (Methanocaldococcus jannaschii (strain ATCC 43067 / DSM 2661 / JAL-1 / JCM 10045 / NBRC 100440) (Methanococcus jannaschii)).